We begin with the raw amino-acid sequence, 376 residues long: 3-dehydroquinate synthase (376 aa).

NAD(+) contacts are provided by residues 115 to 119 (GVIGD), 139 to 140 (TS), lysine 152, and lysine 161. Zn(2+)-binding residues include glutamate 194, histidine 256, and histidine 275.

The protein belongs to the sugar phosphate cyclases superfamily. Dehydroquinate synthase family. The cofactor is Co(2+). Requires Zn(2+) as cofactor. NAD(+) is required as a cofactor.

Its subcellular location is the cytoplasm. It carries out the reaction 7-phospho-2-dehydro-3-deoxy-D-arabino-heptonate = 3-dehydroquinate + phosphate. It functions in the pathway metabolic intermediate biosynthesis; chorismate biosynthesis; chorismate from D-erythrose 4-phosphate and phosphoenolpyruvate: step 2/7. In terms of biological role, catalyzes the conversion of 3-deoxy-D-arabino-heptulosonate 7-phosphate (DAHP) to dehydroquinate (DHQ). In Rhizobium johnstonii (strain DSM 114642 / LMG 32736 / 3841) (Rhizobium leguminosarum bv. viciae), this protein is 3-dehydroquinate synthase.